A 1187-amino-acid polypeptide reads, in one-letter code: DNA-directed RNA polymerase subunit beta (1187 aa).

The disordered stretch occupies residues 1150-1187 (KDEDDDPASSADDLGFNIGARPDAAAKEDQKAEEPEYQ). Over residues 1173–1187 (AAAKEDQKAEEPEYQ) the composition is skewed to basic and acidic residues.

Belongs to the RNA polymerase beta chain family. The RNAP catalytic core consists of 2 alpha, 1 beta, 1 beta' and 1 omega subunit. When a sigma factor is associated with the core the holoenzyme is formed, which can initiate transcription.

It catalyses the reaction RNA(n) + a ribonucleoside 5'-triphosphate = RNA(n+1) + diphosphate. DNA-dependent RNA polymerase catalyzes the transcription of DNA into RNA using the four ribonucleoside triphosphates as substrates. This chain is DNA-directed RNA polymerase subunit beta, found in Bifidobacterium longum (strain DJO10A).